Consider the following 75-residue polypeptide: Metallothionein-like protein 1 (75 aa).

It belongs to the metallothionein superfamily. Type 15 family.

Its function is as follows. Metallothioneins have a high content of cysteine residues that bind various heavy metals. The chain is Metallothionein-like protein 1 (ALI1) from Triticum aestivum (Wheat).